The primary structure comprises 402 residues: Zinc finger protein CONSTANS-LIKE 14 (402 aa).

Zn(2+) contacts are provided by Cys-12, Cys-15, Cys-35, His-40, Cys-55, Cys-58, Cys-78, and His-83. The B box-type 1; atypical zinc finger occupies 12 to 54; it reads CEFCGERTAVLFCRADTAKLCLPCDQHVHSANLLSRKHVRSQI. The segment at 55 to 97 adopts a B box-type 2; atypical zinc-finger fold; it reads CDNCSKEPVSVRCFTDNLVLCQECDWDVHGSCSSSATHERSAV. The segment at 287–322 is disordered; sequence SYQQEDSVHSTSTKGQETSKSNNIPAAIHSHKSSND. Residues 295–310 are compositionally biased toward polar residues; it reads HSTSTKGQETSKSNNI. The stretch at 345–372 forms a coiled coil; the sequence is VTNADLEQMAQNRDNAMQRYKEKKKTRR. Residues 357–399 enclose the CCT domain; sequence RDNAMQRYKEKKKTRRYDKTIRYETRKARAETRLRVKGRFVKA.

This sequence belongs to the CONSTANS family.

It localises to the nucleus. The polypeptide is Zinc finger protein CONSTANS-LIKE 14 (COL14) (Arabidopsis thaliana (Mouse-ear cress)).